The chain runs to 179 residues: MSLKKRYREAIQPKLLKDLNFSNLHQVPKVVKVTVNRGLGEAAQNAKSLEASVEEIATITGQKPVVTRAKKAIAGFKIRQGMPIGVAVTLRGDRMYAFLERLINLALPRIRDFRGVSEKSFDGRGNYTLGVREQIIFPEISFDKIDAIRGMDITIVTTARNDEEGQALLREMGMPFRNN.

The protein belongs to the universal ribosomal protein uL5 family. As to quaternary structure, part of the 50S ribosomal subunit; part of the 5S rRNA/L5/L18/L25 subcomplex. Contacts the 5S rRNA and the P site tRNA. Forms a bridge to the 30S subunit in the 70S ribosome.

Functionally, this is one of the proteins that bind and probably mediate the attachment of the 5S RNA into the large ribosomal subunit, where it forms part of the central protuberance. In the 70S ribosome it contacts protein S13 of the 30S subunit (bridge B1b), connecting the 2 subunits; this bridge is implicated in subunit movement. Contacts the P site tRNA; the 5S rRNA and some of its associated proteins might help stabilize positioning of ribosome-bound tRNAs. The sequence is that of Large ribosomal subunit protein uL5 from Synechococcus sp. (strain RCC307).